Reading from the N-terminus, the 292-residue chain is Elongation factor Ts (292 aa).

The tract at residues 80–83 (TDFV) is involved in Mg(2+) ion dislocation from EF-Tu.

This sequence belongs to the EF-Ts family.

It localises to the cytoplasm. Its function is as follows. Associates with the EF-Tu.GDP complex and induces the exchange of GDP to GTP. It remains bound to the aminoacyl-tRNA.EF-Tu.GTP complex up to the GTP hydrolysis stage on the ribosome. The protein is Elongation factor Ts of Cupriavidus taiwanensis (strain DSM 17343 / BCRC 17206 / CCUG 44338 / CIP 107171 / LMG 19424 / R1) (Ralstonia taiwanensis (strain LMG 19424)).